The chain runs to 224 residues: Ras-related protein Rab-32C (224 aa).

A disordered region spans residues 1-22 (MYSNKNDKDKDKDQNNENNKNN). 35-42 (GKLACGKT) serves as a coordination point for GTP. The Effector region motif lies at 57–65 (YKPTIGVDF). GTP is bound by residues 83 to 87 (DIAGQ) and 142 to 145 (NKCD). Positions 203–224 (GFKLSDQSQSTETTPTQSKTCC) are disordered. Low complexity predominate over residues 209 to 224 (QSQSTETTPTQSKTCC). 2 S-geranylgeranyl cysteine lipidation sites follow: Cys-223 and Cys-224.

It belongs to the small GTPase superfamily. Rab family.

This Dictyostelium discoideum (Social amoeba) protein is Ras-related protein Rab-32C (rab32C).